We begin with the raw amino-acid sequence, 92 residues long: Small ribosomal subunit protein uS19 (92 aa).

This sequence belongs to the universal ribosomal protein uS19 family.

Protein S19 forms a complex with S13 that binds strongly to the 16S ribosomal RNA. This chain is Small ribosomal subunit protein uS19, found in Aliivibrio fischeri (strain ATCC 700601 / ES114) (Vibrio fischeri).